The chain runs to 255 residues: Segregation and condensation protein A (255 aa).

It belongs to the ScpA family. As to quaternary structure, component of a cohesin-like complex composed of ScpA, ScpB and the Smc homodimer, in which ScpA and ScpB bind to the head domain of Smc. The presence of the three proteins is required for the association of the complex with DNA.

The protein localises to the cytoplasm. Its function is as follows. Participates in chromosomal partition during cell division. May act via the formation of a condensin-like complex containing Smc and ScpB that pull DNA away from mid-cell into both cell halves. The polypeptide is Segregation and condensation protein A (Lactiplantibacillus plantarum (strain ATCC BAA-793 / NCIMB 8826 / WCFS1) (Lactobacillus plantarum)).